Reading from the N-terminus, the 591-residue chain is Probable methyltransferase PMT6 (591 aa).

Over 1–13 (MRGSVIGAERSGQ) the chain is Cytoplasmic. The helical; Signal-anchor for type II membrane protein transmembrane segment at 14–34 (TIMVALVLMVGSFYTGSLFGT) threads the bilayer. The Lumenal segment spans residues 35 to 591 (NQPIYVSHPS…FCRKRFWAII (557 aa)). N-linked (GlcNAc...) asparagine glycans are attached at residues Asn-87, Asn-99, Asn-146, Asn-193, Asn-323, Asn-436, Asn-473, and Asn-515.

This sequence belongs to the methyltransferase superfamily.

The protein localises to the endoplasmic reticulum membrane. The protein is Probable methyltransferase PMT6 of Arabidopsis thaliana (Mouse-ear cress).